The following is a 42-amino-acid chain: Photosystem I reaction center subunit IX (42 aa).

A helical transmembrane segment spans residues 7–27; the sequence is YLSTAPVLAAIWFAILAGLLI.

The protein belongs to the PsaJ family.

It localises to the plastid. The protein localises to the chloroplast thylakoid membrane. Functionally, may help in the organization of the PsaE and PsaF subunits. This is Photosystem I reaction center subunit IX from Zygnema circumcarinatum (Green alga).